The sequence spans 424 residues: L-glutamine:scyllo-inosose aminotransferase (424 aa).

A disordered region spans residues 1-21 (MDSSLAISGGPRLSNREWPRW). The residue at position 202 (Lys202) is an N6-(pyridoxal phosphate)lysine.

This sequence belongs to the DegT/DnrJ/EryC1 family. L-glutamine:2-deoxy-scyllo-inosose/scyllo-inosose aminotransferase subfamily. In terms of assembly, homodimer. The cofactor is pyridoxal 5'-phosphate.

It carries out the reaction scyllo-inosose + L-glutamine = 1-amino-1-deoxy-scyllo-inositol + 2-oxoglutaramate. The protein operates within antibiotic biosynthesis; streptomycin biosynthesis. In terms of biological role, catalyzes the PLP-dependent transamination of scyllo-inosose to form scyllo-inosamine. The protein is L-glutamine:scyllo-inosose aminotransferase (stsC) of Streptomyces griseus.